Consider the following 223-residue polypeptide: GTP cyclohydrolase 1 (223 aa).

Residues Cys-111, His-114, and Cys-182 each coordinate Zn(2+).

The protein belongs to the GTP cyclohydrolase I family. Homomer.

It carries out the reaction GTP + H2O = 7,8-dihydroneopterin 3'-triphosphate + formate + H(+). It functions in the pathway cofactor biosynthesis; 7,8-dihydroneopterin triphosphate biosynthesis; 7,8-dihydroneopterin triphosphate from GTP: step 1/1. In Flavobacterium johnsoniae (strain ATCC 17061 / DSM 2064 / JCM 8514 / BCRC 14874 / CCUG 350202 / NBRC 14942 / NCIMB 11054 / UW101) (Cytophaga johnsonae), this protein is GTP cyclohydrolase 1.